The following is a 624-amino-acid chain: Phragmoplastin DRP1E (624 aa).

The residue at position 2 (Thr2) is an N-acetylthreonine. The Dynamin-type G domain maps to 37–306; the sequence is WEALPTVAVV…LESVIRTRIP (270 aa). The tract at residues 47–54 is G1 motif; the sequence is GGQSSGKS. 50–55 lines the GTP pocket; that stretch reads SSGKSS. A G2 motif region spans residues 73-75; it reads VTR. A G3 motif region spans residues 148-151; the sequence is DLPG. The interval 217 to 220 is G4 motif; that stretch reads TKLD. GTP is bound by residues 218–223 and 248–251; these read KLDLMD and NRSQ. The segment at 247-250 is G5 motif; that stretch reads VNRS. In terms of domain architecture, GED spans 532–624; the sequence is FRRIASNVSA…DEIDAVAWVR (93 aa).

Belongs to the TRAFAC class dynamin-like GTPase superfamily. Dynamin/Fzo/YdjA family. In terms of assembly, forms homodimer and may homooligomerize and heterooligomerize to form the phragmoplastin complex. Binds to PHIP1. In terms of tissue distribution, ubiquitous.

The protein resides in the cytoplasm. Its subcellular location is the cytoskeleton. The protein localises to the phragmoplast. It catalyses the reaction GTP + H2O = GDP + phosphate + H(+). Functionally, microtubule-associated force-producing protein that is targeted to the tubulo-vesicular network of the forming cell plate during cytokinesis. Also plays a major role in plasma membrane maintenance and cell wall integrity with an implication in vesicular trafficking, polar cell expansion, and other aspects of plant growth and development. Has a GTPase activity. This chain is Phragmoplastin DRP1E, found in Arabidopsis thaliana (Mouse-ear cress).